A 505-amino-acid polypeptide reads, in one-letter code: UDP-N-acetylglucosamine diphosphorylase 1 (505 aa).

Basic and acidic residues predominate over residues methionine 1–asparagine 10. The interval methionine 1 to serine 32 is disordered. Residues threonine 14–threonine 24 show a composition bias toward low complexity. The Substrate binding motif lies at leucine 134–glycine 137. Asparagine 253 lines the substrate pocket. Positions glutamate 335–tyrosine 336 match the Substrate binding motif. A substrate-binding site is contributed by lysine 432.

This sequence belongs to the UDPGP type 1 family. In terms of assembly, monomer. It depends on Mg(2+) as a cofactor. Mn(2+) is required as a cofactor. As to expression, expressed in root tips, stipules and mature pollen grains.

It catalyses the reaction N-acetyl-alpha-D-glucosamine 1-phosphate + UTP + H(+) = UDP-N-acetyl-alpha-D-glucosamine + diphosphate. It carries out the reaction N-acetyl-alpha-D-galactosamine 1-phosphate + UTP + H(+) = UDP-N-acetyl-alpha-D-galactosamine + diphosphate. It functions in the pathway nucleotide-sugar biosynthesis; UDP-N-acetyl-alpha-D-glucosamine biosynthesis; UDP-N-acetyl-alpha-D-glucosamine from N-acetyl-alpha-D-glucosamine 1-phosphate: step 1/1. With respect to regulation, inhibited by hygromycin and streptomycin, but not by gentamycin or kanamycin. Functionally, uridylyltransferase involved in the biosynthesis of UDP-glucosamine, an essential precursor for glycoprotein and glycolipid synthesis. Can use both UDP-glucosamine and the 4-epimer UDP-galactosamine as substrates, but no other sugars or NTPs. Acts redundantly with GLCNAC1PUT2. Required for gametogenesis and embryo development. The sequence is that of UDP-N-acetylglucosamine diphosphorylase 1 (GLCNAC1PUT1) from Arabidopsis thaliana (Mouse-ear cress).